Consider the following 911-residue polypeptide: Protein transport protein SEC24-1 (911 aa).

A compositionally biased stretch (low complexity) spans Gln108–Pro123. Residues Gln108–Met130 form a disordered region. Residues Cys226, Cys229, Cys248, and Cys251 each coordinate Zn(2+). Residues Cys226–Cys251 are zinc finger-like.

This sequence belongs to the SEC23/SEC24 family. SEC24 subfamily. As to quaternary structure, the COPII coat is composed of at least 5 proteins: the SEC23/24 complex, the SEC13/31 complex, and the protein SAR1. Golgi apparatus membrane; Peripheral membrane protein; Cytoplasmic side.

The protein localises to the cytoplasm. It is found in the cytoplasmic vesicle. It localises to the COPII-coated vesicle membrane. The protein resides in the endoplasmic reticulum membrane. Its subcellular location is the golgi apparatus membrane. Component of the coat protein complex II (COPII) which promotes the formation of transport vesicles from the endoplasmic reticulum (ER). The coat has two main functions, the physical deformation of the endoplasmic reticulum membrane into vesicles and the selection of cargo molecules. This chain is Protein transport protein SEC24-1 (SEC241), found in Naumovozyma castellii (Yeast).